Here is a 375-residue protein sequence, read N- to C-terminus: Succinyl-diaminopimelate desuccinylase (375 aa).

A Zn(2+)-binding site is contributed by histidine 66. Residue aspartate 68 is part of the active site. Position 99 (aspartate 99) interacts with Zn(2+). Catalysis depends on glutamate 133, which acts as the Proton acceptor. Residues glutamate 134, glutamate 162, and histidine 348 each coordinate Zn(2+).

The protein belongs to the peptidase M20A family. DapE subfamily. Homodimer. Zn(2+) is required as a cofactor. Co(2+) serves as cofactor.

It catalyses the reaction N-succinyl-(2S,6S)-2,6-diaminopimelate + H2O = (2S,6S)-2,6-diaminopimelate + succinate. Its pathway is amino-acid biosynthesis; L-lysine biosynthesis via DAP pathway; LL-2,6-diaminopimelate from (S)-tetrahydrodipicolinate (succinylase route): step 3/3. In terms of biological role, catalyzes the hydrolysis of N-succinyl-L,L-diaminopimelic acid (SDAP), forming succinate and LL-2,6-diaminopimelate (DAP), an intermediate involved in the bacterial biosynthesis of lysine and meso-diaminopimelic acid, an essential component of bacterial cell walls. In Citrobacter koseri (strain ATCC BAA-895 / CDC 4225-83 / SGSC4696), this protein is Succinyl-diaminopimelate desuccinylase.